The chain runs to 288 residues: Elongation factor Ts (288 aa).

An involved in Mg(2+) ion dislocation from EF-Tu region spans residues Thr-82–Val-85.

Belongs to the EF-Ts family.

It localises to the cytoplasm. Its function is as follows. Associates with the EF-Tu.GDP complex and induces the exchange of GDP to GTP. It remains bound to the aminoacyl-tRNA.EF-Tu.GTP complex up to the GTP hydrolysis stage on the ribosome. In Chlorobaculum parvum (strain DSM 263 / NCIMB 8327) (Chlorobium vibrioforme subsp. thiosulfatophilum), this protein is Elongation factor Ts.